The chain runs to 354 residues: MAGPLTVPWMPPHDPGTPALSVVDMHTGGEPLRIVLAGCPEVVGPTLLAKRRYMRQHLDHVRRRLMFEPRGHRDMYGAVLVPSELPDAHLGVLFLNNEGYSSMCGHAVLALGRFALDFGLVPAPPSDAQEALVNIHCPCGLVAAFVECEGCRSRGPVRFHSVPAFVLATDFLVDVPGRGKVVVDIAYGGAFYAFVSAEKLGLDVCSAKMGDLVAAASAVTEAVKAQFKISHPDSEDLAFLYGTILTDGKDTYNEEPTTNICVFADEQVDRSPTGSGVTARIALQYHKGLLELNQTRAFKSSATGSVFTGKAVREAKCGDFKAVIVEVSGQAHYTGTASFIVEDDDPLRDGFLLK.

The active-site Proton acceptor is the C104. Substrate-binding positions include 105 to 106 (GH), D269, and 274 to 275 (GS).

This sequence belongs to the proline racemase family. Homodimer.

The enzyme catalyses trans-3-hydroxy-L-proline = 1-pyrroline-2-carboxylate + H2O. In terms of biological role, catalyzes the dehydration of trans-3-hydroxy-L-proline to Delta(1)-pyrroline-2-carboxylate (Pyr2C). This Bos taurus (Bovine) protein is Trans-L-3-hydroxyproline dehydratase (L3HYPDH).